We begin with the raw amino-acid sequence, 343 residues long: Dihydroorotase (343 aa).

Zn(2+)-binding residues include His13 and His15. Residues His15–Arg17 and Asn41 each bind substrate. Zn(2+)-binding residues include Lys99, His136, and His174. Lys99 is modified (N6-carboxylysine). His136 is a substrate binding site. Leu219 is a binding site for substrate. Asp247 provides a ligand contact to Zn(2+). The active site involves Asp247. 2 residues coordinate substrate: His251 and Ala263.

The protein belongs to the metallo-dependent hydrolases superfamily. DHOase family. Class II DHOase subfamily. In terms of assembly, homodimer. Requires Zn(2+) as cofactor.

The enzyme catalyses (S)-dihydroorotate + H2O = N-carbamoyl-L-aspartate + H(+). Its pathway is pyrimidine metabolism; UMP biosynthesis via de novo pathway; (S)-dihydroorotate from bicarbonate: step 3/3. In terms of biological role, catalyzes the reversible cyclization of carbamoyl aspartate to dihydroorotate. The polypeptide is Dihydroorotase (Shewanella baltica (strain OS223)).